A 66-amino-acid polypeptide reads, in one-letter code: Stress-induced protein KIN2 (66 aa).

The span at 1–10 (MSETNKNAFQ) shows a compositional bias: polar residues. The segment at 1–20 (MSETNKNAFQAGQAAGKAEE) is disordered. 2 consecutive repeats follow at residues 31–35 (DAAAA) and 49–53 (DAAVG).

Interacts with DEK3. As to expression, expressed at high levels in embryos and mature seeds.

In Arabidopsis thaliana (Mouse-ear cress), this protein is Stress-induced protein KIN2.